Reading from the N-terminus, the 811-residue chain is Potassium transporter 7 (811 aa).

At 1 to 52 (MPSYQYLLSLLFYILDCTDRFSVIVTIHNHRVGVLMIVLLQDQWKSYCRTIS) the chain is on the cytoplasmic side. The chain crosses the membrane as a helical span at residues 53-73 (LLAFQSFGVVYGDLSTSPLYV). Residues 74-93 (YKSAFSGRLNNYRDETTIFG) lie on the Extracellular side of the membrane. Residues 94-114 (LFSLIFWTLTLLPLLKYVIIV) form a helical membrane-spanning segment. At 115–181 (LNADDNGEGG…EKHRKLRTCL (67 aa)) the chain is on the cytoplasmic side. Residues 182–202 (LLFVLFGACMVIGDGVFTPAI) form a helical membrane-spanning segment. The Extracellular segment spans residues 203 to 217 (SVLSAISGLKDPGPG). The chain crosses the membrane as a helical span at residues 218–238 (GIPDGWVVFIACIVLVGLFAL). Topologically, residues 239–245 (QHRGTHR) are cytoplasmic. Residues 246-266 (VAFMFAPIVVVWLLSIGVIGL) traverse the membrane as a helical segment. At 267–296 (YNIIHWNHRIFLALSPHYVIKFFKMTGKDG) the chain is on the extracellular side. Residues 297-317 (WLSLGGVLLAITGTEAMFADL) traverse the membrane as a helical segment. The Cytoplasmic segment spans residues 318–326 (GHFTAASIR). A helical transmembrane segment spans residues 327 to 347 (LAFVGAIYPCLVLQYMGQAAF). The Extracellular segment spans residues 348-366 (LSRNMSAVEDSFYQSVPRS). An N-linked (GlcNAc...) asparagine glycan is attached at asparagine 351. Residues 367–387 (LFWPVFVIATLAAVVGSQSII) form a helical membrane-spanning segment. Residues 388 to 418 (SATFSIVKQCLSLGCFPRVKVVHTSRWIHGQ) lie on the Cytoplasmic side of the membrane. A helical membrane pass occupies residues 419-439 (IYIPEINWILMVLCLAVTLGF). Topologically, residues 440–450 (RDTTVIGNAYG) are extracellular. The chain crosses the membrane as a helical span at residues 451–471 (LACIVVMFVTTWLMALVIIFV). Over 472-475 (WQKN) the chain is Cytoplasmic. A helical membrane pass occupies residues 476 to 496 (ILLALLFVVAFGSIEVVYLSA). The Extracellular segment spans residues 497 to 503 (AVTKVPQ). Residues 504–524 (GGWAPIVFAFVFMLVMYVWHY) traverse the membrane as a helical segment. The Cytoplasmic portion of the chain corresponds to 525–811 (GSRRKYLFDL…LVEVGMIYYV (287 aa)). Residues 680-702 (TGLVMRDSNNEASGTSLTRSSRS) form a disordered region.

This sequence belongs to the HAK/KUP transporter (TC 2.A.72.3) family. As to expression, expressed in roots and shoots.

The protein resides in the membrane. High-affinity potassium transporter. The polypeptide is Potassium transporter 7 (HAK7) (Oryza sativa subsp. japonica (Rice)).